The sequence spans 67 residues: Putative antitoxin PF1308 (67 aa).

It belongs to the UPF0165 family.

In terms of biological role, possibly the antitoxin component of a type II toxin-antitoxin (TA) system. This chain is Putative antitoxin PF1308, found in Pyrococcus furiosus (strain ATCC 43587 / DSM 3638 / JCM 8422 / Vc1).